Consider the following 456-residue polypeptide: tRNA modification GTPase MnmE (456 aa).

R24, E81, and K120 together coordinate (6S)-5-formyl-5,6,7,8-tetrahydrofolate. In terms of domain architecture, TrmE-type G spans 216–379; that stretch reads GMTVVIAGRP…LREHLKACMG (164 aa). N226 provides a ligand contact to K(+). GTP contacts are provided by residues 226 to 231, 245 to 251, 270 to 273, 335 to 338, and 359 to 361; these read NAGKSS, TEIAGTT, DTAG, NKAD, and SAR. S230 is a binding site for Mg(2+). Residues T245, I247, and T250 each coordinate K(+). T251 contributes to the Mg(2+) binding site. K456 serves as a coordination point for (6S)-5-formyl-5,6,7,8-tetrahydrofolate.

The protein belongs to the TRAFAC class TrmE-Era-EngA-EngB-Septin-like GTPase superfamily. TrmE GTPase family. Homodimer. Heterotetramer of two MnmE and two MnmG subunits. The cofactor is K(+).

It is found in the cytoplasm. Exhibits a very high intrinsic GTPase hydrolysis rate. Involved in the addition of a carboxymethylaminomethyl (cmnm) group at the wobble position (U34) of certain tRNAs, forming tRNA-cmnm(5)s(2)U34. In Pseudomonas savastanoi pv. phaseolicola (strain 1448A / Race 6) (Pseudomonas syringae pv. phaseolicola (strain 1448A / Race 6)), this protein is tRNA modification GTPase MnmE.